A 198-amino-acid chain; its full sequence is Probable GTP-binding protein EngB (198 aa).

The region spanning 22–195 (GHPEIAFLGR…WSWLEQTAGL (174 aa)) is the EngB-type G domain. GTP-binding positions include 30-37 (GRSNVGKS), 57-61 (GKTQT), 75-78 (DVPG), 142-145 (TKID), and 174-176 (FSA). Mg(2+) contacts are provided by S37 and T59.

This sequence belongs to the TRAFAC class TrmE-Era-EngA-EngB-Septin-like GTPase superfamily. EngB GTPase family. Mg(2+) is required as a cofactor.

Functionally, necessary for normal cell division and for the maintenance of normal septation. This Lacticaseibacillus paracasei (strain ATCC 334 / BCRC 17002 / CCUG 31169 / CIP 107868 / KCTC 3260 / NRRL B-441) (Lactobacillus paracasei) protein is Probable GTP-binding protein EngB.